We begin with the raw amino-acid sequence, 250 residues long: Glycerol-1-phosphate phosphohydrolase 1 (250 aa).

Asp-18 acts as the Nucleophile in catalysis. Asp-18 and Asp-20 together coordinate Mg(2+). The Proton donor role is filled by Asp-20. Lys-64 participates in a covalent cross-link: Glycyl lysine isopeptide (Lys-Gly) (interchain with G-Cter in SUMO); alternate. A Glycyl lysine isopeptide (Lys-Gly) (interchain with G-Cter in ubiquitin); alternate cross-link involves residue Lys-64. Position 90 is a phosphoserine (Ser-90). Lys-144 participates in a covalent cross-link: Glycyl lysine isopeptide (Lys-Gly) (interchain with G-Cter in ubiquitin). Residue Asp-179 participates in Mg(2+) binding.

It belongs to the HAD-like hydrolase superfamily. DOG/GPP family. Monomer. Mg(2+) serves as cofactor.

It localises to the cytoplasm. The protein localises to the nucleus. It carries out the reaction sn-glycerol 1-phosphate + H2O = glycerol + phosphate. It catalyses the reaction sn-glycerol 3-phosphate + H2O = glycerol + phosphate. Major isoform of glycerol-1-phosphate phosphohydrolase involved in glycerol biosynthesis. Plays a role in osmoadaptation and required for adaptation to anaerobic conditions. The polypeptide is Glycerol-1-phosphate phosphohydrolase 1 (Saccharomyces cerevisiae (strain ATCC 204508 / S288c) (Baker's yeast)).